The sequence spans 1862 residues: Ankyrin-1 (1862 aa).

The interval 1–827 (MGFCKADAAT…DELVGSKAER (827 aa)) is 89 kDa domain. ANK repeat units follow at residues 40–69 (NGLN…ILET), 73–102 (KGNT…NVNA), 106–135 (KGFT…NQNV), 139–168 (DGFT…KGKV), 170–197 (LPAL…NPDV), 201–230 (TGFT…SVNF), 234–263 (NGIT…QIET), 267–296 (DELT…PIQA), 300–329 (NGLS…EIDD), 333–362 (DHLT…KPNS), 366–395 (NGFT…SIDA), 399–428 (SGLT…SPNV), 432–461 (KVET…KANA), 465–494 (DDQT…SPNL), 498–527 (AGHT…SQAC), 531–560 (KGFT…HPNA), 564–593 (NGLT…SPHS), 597–626 (NGYT…SANA), 630–659 (QGVT…NGNL), 663–692 (SGLT…TVDA), 696–725 (MGYT…DVNA), 729–758 (LGYS…SPNE), and 762–791 (NGTT…ETSV). Position 55 is a phosphoserine (Lys-55). A (3S)-3-hydroxyasparagine; by HIF1AN; partial modification is found at Asn-101. Position 229 is a (3S)-3-hydroxyasparagine; by HIF1AN (Asn-229). Phosphoserine is present on Ser-425. A (3S)-3-hydroxyasparagine; by HIF1AN mark is found at Asn-427 and Asn-460. (3S)-3-hydroxyasparagine; by HIF1AN is present on residues Asn-625 and Asn-658. A (3S)-3-hydroxyaspartate; by HIF1AN modification is found at Asp-691. Asn-724 carries the post-translational modification (3S)-3-hydroxyasparagine; by HIF1AN. Phosphoserine is present on Ser-755. Asn-757 bears the (3S)-3-hydroxyasparagine; by HIF1AN mark. Phosphoserine occurs at positions 777, 813, 830, and 852. Residues 812 to 834 (VSEDEGDELVGSKAERRDSRDVG) form a disordered region. A compositionally biased stretch (basic and acidic residues) spans 824-834 (KAERRDSRDVG). Thr-862 carries the phosphothreonine modification. The segment at 872-900 (DQEQASKEYDEDSLIPSSPATETSDNISP) is disordered. Over residues 886 to 900 (IPSSPATETSDNISP) the composition is skewed to polar residues. ZU5 domains follow at residues 909 to 1064 (FLVS…IMSR) and 1066 to 1212 (CQDY…LSDC). At Thr-957 the chain carries Phosphothreonine. Tyr-1069 carries the phosphotyrosine modification. Residue Ser-1078 is modified to Phosphoserine. A UPA domain region spans residues 1197–1331 (ANFTTNVSAR…PVKVRDSSRE (135 aa)). Phosphothreonine is present on residues Thr-1374 and Thr-1376. Phosphoserine occurs at positions 1386 and 1388. The 55 kDa regulatory domain stretch occupies residues 1387-1862 (ESRLGFTSDT…KRASLKRGKQ (476 aa)). Residue Thr-1396 is modified to Phosphothreonine. Residues 1399–1483 (VEMRMAVIRE…EIVNMLEGSG (85 aa)) form the Death domain. A phosphoserine mark is found at Ser-1424, Ser-1473, and Ser-1482. The segment at 1481–1506 (GSGRQSRNLKPERRHGDREYSLSPSQ) is disordered. Over residues 1489–1500 (LKPERRHGDREY) the composition is skewed to basic and acidic residues. Residues Ser-1519, Ser-1529, and Ser-1612 each carry the phosphoserine modification. Disordered regions lie at residues 1598-1720 (EGAH…GPHS) and 1744-1767 (VSTR…KEPS). Positions 1637 to 1647 (EGQRSEKKRQE) are enriched in basic and acidic residues. The span at 1648-1666 (VSGTEQDTETEVSLVSGQQ) shows a compositional bias: polar residues. Ser-1660, Ser-1675, and Ser-1685 each carry phosphoserine. The segment covering 1681-1694 (VLDRSQARTLDWDK) has biased composition (basic and acidic residues). Polar residues predominate over residues 1695-1720 (QGSTAVHPQEATQSSWQEEVTQGPHS).

Component of the ankyrin-1 complex in the erythrocyte, composed of ANK1, RHCE, RHAG, SLC4A1, EPB42, GYPA, GYPB and AQP1. Interacts with a number of integral membrane proteins and cytoskeletal proteins. Interacts (via N-terminus) with SPTB/spectrin (beta chain). Also interacts with TTN/titin. Isoform Mu17 interacts with OBSCN isoform 3/obscurin. Interacts with HIF1AN. Interacts (via ANK 1-5 repeats) with RHCE; this interaction mediates the primary membrane attachment site for ANK1. Interacts (via ANK 1-2 repeats) with AQP1 (via the N-terminal). Interacts (via ANK 1-13 repeats) with EPB42. Interacts directly with SLC4A1 (via the cytoplasmic domain); this interaction is mediated by the SLC4A1 Band 3-II and Band 3-III dimers. In terms of processing, regulated by phosphorylation. Post-translationally, acylated by palmitic acid group(s). Hydroxylated by HIF1AN at several asparagine and 1 aspartate residue within ANK repeat region; hydroxylation seems to increase the conformational stability of this region and may also modulate protein-protein interactions mediated by the ANK repeat region.

It is found in the cytoplasm. Its subcellular location is the cytoskeleton. The protein localises to the membrane. The protein resides in the sarcoplasmic reticulum. Its function is as follows. Component of the ankyrin-1 complex, a multiprotein complex involved in the stability and shape of the erythrocyte membrane. Attaches integral membrane proteins to cytoskeletal elements; binds to the erythrocyte membrane protein band 4.2, to Na-K ATPase, to the lymphocyte membrane protein GP85, and to the cytoskeletal proteins fodrin, tubulin, vimentin and desmin. Erythrocyte ankyrins also link spectrin (beta chain) to the cytoplasmic domain of the erythrocytes anion exchange protein; they retain most or all of these binding functions. The chain is Ankyrin-1 from Mus musculus (Mouse).